A 74-amino-acid chain; its full sequence is U-actitoxin-Bgr3a (74 aa).

An N-terminal signal peptide occupies residues 1-21 (MSAQRFLFLLVVTSLIAASLA). The propeptide occupies 22 to 29 (APKDVQLT). Disulfide bonds link Cys-35–Cys-68, Cys-37–Cys-61, and Cys-51–Cys-69.

This sequence belongs to the sea anemone type 3 (BDS) potassium channel toxin family.

The protein localises to the secreted. It is found in the nematocyst. Potently and selectively inhibits voltage-gated potassium channels Kv11/KCNH/ERG. Acts as a gating-modifier toxin that shifts the voltage-dependence of ERG activation in the positive direction and suppresses its current amplitudes elicited by strong depolarizing pulses that maximally activate the channels. The protein is U-actitoxin-Bgr3a of Bunodosoma granuliferum (Red warty sea anemone).